A 490-amino-acid polypeptide reads, in one-letter code: Tegument protein VP16 (490 aa).

The disordered stretch occupies residues 12 to 37 (MDADGASPPPPRPAGGPKNTPAAPPL). Ser18, Ser353, Ser411, and Ser452 each carry phosphoserine. Residues 411–490 (STAPPTDVSL…DALGIDEYGG (80 aa)) form a transcriptional activation region.

It belongs to the herpesviridae tegument protein VP16 protein family. As to quaternary structure, interacts with VP22. Interacts with gH (via C-terminus). Interacts with the virion host shutoff protein (vhs). Interacts with VP11/12. Associates with the VP16-induced complex; binding to host HCFC1 activates VP16 for association with the octamer motif-binding host protein POU2F1, to form a multiprotein-DNA complex responsible for activating transcription of the viral immediate early genes.

Its subcellular location is the virion tegument. It localises to the host nucleus. Transcriptional activator of immediate-early (IE) gene products (alpha genes). Acts as a key activator of lytic infection by initiating the lytic program through the assembly of the transcriptional regulatory VP16-induced complex composed of VP16 and two cellular factors, HCFC1 and POU2F 1. VP16-induced complex represents a regulatory switch: when it is on, it promotes IE-gene expression and thus lytic infection, and when it is off, it limits IE-gene transcription favoring latent infection. Functionally, may play a role in the aggregation of tegument proteins around nucleocapsids during virus morphogenesis. The protein is Tegument protein VP16 of Homo sapiens (Human).